A 549-amino-acid polypeptide reads, in one-letter code: Eukaryotic translation initiation factor 4B2 (549 aa).

Disordered regions lie at residues 1–446 and 465–549; these read MSKP…DLIR and FRPR…REGW. The segment covering 24–46 has biased composition (low complexity); it reads AEATATAADSQSFPSLKEAATAK. Composition is skewed to gly residues over residues 96 to 109 and 126 to 136; these read RLGG…GGRS and SWGGGGGGRRS. The Nuclear localization signal 1 motif lies at 169 to 176; it reads GKKSLPSF. Positions 184–218 are enriched in gly residues; that stretch reads RYGGGGGSFGGGGGGGAGSYGGGGAGAGSGGGGGF. The short motif at 234-241 is the Nuclear localization signal 2 element; it reads SSTFGSGF. The segment covering 263–278 has biased composition (basic and acidic residues); sequence QEERRRLVFEPRKADT. Polar residues predominate over residues 281-292; it reads SETPTAVKTSKP. The span at 299 to 323 shows a compositional bias: basic and acidic residues; that stretch reads RPREQVLAEKGLDWKKLDSDIEAKK. Residues 327 to 349 are compositionally biased toward low complexity; it reads SRPSSAQSSRPSSAQSNRSESSA. Composition is skewed to basic and acidic residues over residues 369–431, 485–507, and 518–549; these read AKPR…KESQ, ERPH…ERPR, and PVDD…REGW.

The protein belongs to the eIF-4 subunit B family. As to quaternary structure, homodimer. Nonspherical monomer. mRNA-discriminating component of initiation complexes. Post-translationally, phosphorylated.

It localises to the nucleus. Functionally, promotes the eIF4F and eIF4A RNA-dependent ATP-hydrolysis activity with different efficiency depending on mRNAs, thus providing mRNA discrimination during initiation of translation. The polypeptide is Eukaryotic translation initiation factor 4B2 (Arabidopsis thaliana (Mouse-ear cress)).